A 1360-amino-acid chain; its full sequence is Zinc finger protein GLI1 (1360 aa).

The interval 198-245 (DTIGSKRLEDGSEGDISSPASVGTQDPLLGLLDGRDDLEKDDGKHEPE) is disordered. A compositionally biased stretch (basic and acidic residues) spans 230–245 (DGRDDLEKDDGKHEPE). A C2H2-type 1 zinc finger spans residues 250–275 (TNCHWESCTKEFDTQEHLVHHINNEH). An interaction with DNA region spans residues 298-306 (KAQYMLVVH). 3 consecutive C2H2-type zinc fingers follow at residues 316 to 340 (HKCTFEGCNKAYSRLENLKTHLRSH), 346 to 371 (YVCEHEGCNKAFSNASDRAKHQNRTH), and 377 to 402 (YVCKIPGCTKRYTDPSSLRKHVKTVH). Interaction with DNA regions lie at residues 360–365 (ASDRAK) and 390–396 (DPSSLRK). 4 disordered regions span residues 390 to 434 (DPSS…NVKG), 457 to 500 (ITLK…SFED), 718 to 740 (IIHPAQAPGAGIRRASDPARTGG), and 1120 to 1213 (YMNY…IQPQ). The span at 461-473 (SQPSPGGQSSCSS) shows a compositional bias: low complexity. A compositionally biased stretch (polar residues) spans 474 to 496 (ERSPLGSTNNNDSGVEMNANTGG). A compositionally biased stretch (low complexity) spans 1134 to 1143 (SPSSQDSQSS). The span at 1173-1190 (RQHSVSSQSTYMGSPNQL) shows a compositional bias: polar residues.

The protein belongs to the GLI C2H2-type zinc-finger protein family.

It is found in the cytoplasm. It localises to the nucleus. Acts as a transcriptional activator. Binds to the DNA consensus sequence 5'-GACCACCCA-3'. May regulate the transcription of specific genes during normal development. Mediates SHH signaling. Plays a role in cell proliferation and differentiation via its role in SHH signaling. This Xenopus laevis (African clawed frog) protein is Zinc finger protein GLI1 (gli1).